A 440-amino-acid polypeptide reads, in one-letter code: GTPase Der (440 aa).

2 EngA-type G domains span residues 3–167 and 176–351; these read PIIA…PYDR and TRIA…EQYC. Residues 9–16, 56–60, 119–122, 182–189, 229–233, and 294–297 each bind GTP; these read GRPNVGKS, DTGGF, NKVD, DTAGI, and NKWD. A KH-like domain is found at 352–436; it reads KRVTTGELNR…PLKLIFRGRD (85 aa).

Belongs to the TRAFAC class TrmE-Era-EngA-EngB-Septin-like GTPase superfamily. EngA (Der) GTPase family. In terms of assembly, associates with the 50S ribosomal subunit.

GTPase that plays an essential role in the late steps of ribosome biogenesis. The sequence is that of GTPase Der from Citrifermentans bemidjiense (strain ATCC BAA-1014 / DSM 16622 / JCM 12645 / Bem) (Geobacter bemidjiensis).